Reading from the N-terminus, the 396-residue chain is Putative F-box/kelch-repeat protein At4g11770 (396 aa).

In terms of domain architecture, F-box spans 9–55; it reads PCNMPYLPDDLLLNILGRVSRLYYPILSLVSKRFRSLVGSLELYKIR. Kelch repeat units lie at residues 151–197, 198–248, and 250–296; these read YIYM…VLDG, KIYV…YEEK, and YLFG…VFYK.

The polypeptide is Putative F-box/kelch-repeat protein At4g11770 (Arabidopsis thaliana (Mouse-ear cress)).